A 571-amino-acid chain; its full sequence is Sporulation-specific protein 1 (571 aa).

Disordered stretches follow at residues 1–53, 67–133, and 482–501; these read MRSS…EEDV, MTAF…PYRQ, and KEAKNISSSTAEVPSISQPE. The span at 23–37 shows a compositional bias: basic residues; that stretch reads SKQKKPTKFRERMRR. Polar residues-rich tracts occupy residues 67–86, 95–121, and 486–499; these read MTAFNNNDNGEVQDVTNNFF, PVQSSVKTFLTGNNDEDSNFQQNQNPK, and NISSSTAEVPSISQ. Coiled coils occupy residues 469 to 486 and 542 to 566; these read DQLVELLAQEKEEKEAKN and ESASEESKVLAAALNDAKQNLDENV.

Interacts directly with ADY3. Probable component of a spindle pole body (SPB) complex composed of ADY3, SSP1, DON1, MPC54, SPO21/MPC70, NUD1 and CNM67. Phosphorylated.

It is found in the prospore membrane. Functionally, involved in the pathway that organizes the shaping and sizing of the prospore membrane (PSM) during sporulation. May be required for the formation of ADY3 and DON1-containing protein coats at the leading edge of the PSMs during meiosis II. In Saccharomyces cerevisiae (strain ATCC 204508 / S288c) (Baker's yeast), this protein is Sporulation-specific protein 1 (SSP1).